Consider the following 96-residue polypeptide: Prokineticin Bm8-d (96 aa).

Positions 1-19 are cleaved as a signal peptide; sequence MKCFAQIVVLLLVIAFSHG. 5 disulfides stabilise this stretch: C26–C38, C32–C50, C37–C78, C60–C86, and C80–C95.

Belongs to the AVIT (prokineticin) family. Expressed by the skin glands.

The protein localises to the secreted. Potent agonist for both PKR1/PROKR1 and PKR2/PROKR2, and inducer of a potent and long-lasting hyperalgesia. Also potentiates capsaicin-induced TRPV1 current, when tested on DRG neurons. At subnanomolar concentrations, this protein both induces potent chemotaxis of macrophages and stimulates LPS-induced production of the pro-inflammatory cytokines IL-1 and IL-12. In vivo, potently stimulates the contraction of the guinea-pig gastrointestinal (GI) smooth muscle (nanomolar concentration). The polypeptide is Prokineticin Bm8-d (Bombina maxima (Giant fire-bellied toad)).